A 181-amino-acid polypeptide reads, in one-letter code: 28 kDa heat- and acid-stable phosphoprotein (181 aa).

Residues 1 to 14 (MPKGGRKGGHKGRA) show a composition bias toward basic residues. Residues 1-117 (MPKGGRKGGH…SRREREEIEK (117 aa)) are disordered. A Phosphothreonine modification is found at Thr-18. A Phosphoserine modification is found at Ser-19. The span at 30 to 59 (EKQKAREEEEQKEGGDGAAGDPKKEKKSLD) shows a compositional bias: basic and acidic residues. Lys-52 participates in a covalent cross-link: Glycyl lysine isopeptide (Lys-Gly) (interchain with G-Cter in SUMO2). Phosphoserine occurs at positions 57, 60, and 63. The segment covering 60 to 69 (SDESEDEEDD) has biased composition (acidic residues). Tyr-70 is modified (phosphotyrosine). Residues 102–117 (DGPKELSRREREEIEK) show a composition bias toward basic and acidic residues. At Lys-126 the chain carries N6-methyllysine. N6-acetyllysine is present on residues Lys-132 and Lys-164. Residues 151–167 (EEAARKKEEERKAKDDA) show a composition bias toward basic and acidic residues. Positions 151–181 (EEAARKKEEERKAKDDATLSGKRMQSLSLNK) are disordered. Residues Ser-176 and Ser-178 each carry the phosphoserine modification.

Belongs to the PDAP1 family.

Functionally, enhances PDGFA-stimulated cell growth in fibroblasts, but inhibits the mitogenic effect of PDGFB. The chain is 28 kDa heat- and acid-stable phosphoprotein (PDAP1) from Homo sapiens (Human).